The primary structure comprises 300 residues: Cation-efflux pump FieF (300 aa).

The next 4 membrane-spanning stretches (helical) occupy residues 12 to 32 (AAIA…FAWW), 39 to 59 (ILAA…NLLV), 82 to 102 (AALA…LTGI), and 114 to 134 (PGVG…LVSF). Zn(2+) contacts are provided by D45 and D49. Zn(2+)-binding residues include H153 and D157. 2 helical membrane passes run 156-176 (SDVM…YGWH) and 178-198 (ADAL…LRMG).

Belongs to the cation diffusion facilitator (CDF) transporter (TC 2.A.4) family. FieF subfamily. Homodimer.

It localises to the cell inner membrane. The enzyme catalyses Zn(2+)(in) + H(+)(out) = Zn(2+)(out) + H(+)(in). The catalysed reaction is Cd(2+)(in) + H(+)(out) = Cd(2+)(out) + H(+)(in). It carries out the reaction Fe(2+)(in) + H(+)(out) = Fe(2+)(out) + H(+)(in). Divalent metal cation transporter which exports Zn(2+), Cd(2+) and possibly Fe(2+). May be involved in zinc and iron detoxification by efflux. In Shigella boydii serotype 18 (strain CDC 3083-94 / BS512), this protein is Cation-efflux pump FieF.